The sequence spans 557 residues: Formate--tetrahydrofolate ligase (557 aa).

66–73 is a binding site for ATP; sequence TPAGEGKS.

This sequence belongs to the formate--tetrahydrofolate ligase family.

The catalysed reaction is (6S)-5,6,7,8-tetrahydrofolate + formate + ATP = (6R)-10-formyltetrahydrofolate + ADP + phosphate. Its pathway is one-carbon metabolism; tetrahydrofolate interconversion. In Clostridium botulinum (strain Kyoto / Type A2), this protein is Formate--tetrahydrofolate ligase.